A 147-amino-acid polypeptide reads, in one-letter code: Fibromodulin (147 aa).

6 LRR repeats span residues 1–15, 16–37, 40–61, 63–84, 85–105, and 108–128; these read LDHN…PLPR, SLRE…ALEG, NLTA…MRGL, SLIL…LPSA, LEQL…YFRG, and KLLY…ASNT. Asn-5 carries an N-linked (GlcNAc...) (keratan sulfate) asparagine glycan. Asn-40 carries N-linked (GlcNAc...) (keratan sulfate) asparagine glycosylation. Residue Asn-130 is glycosylated (N-linked (GlcNAc...) (keratan sulfate) asparagine). The LRR 7 repeat unit spans residues 133–147; the sequence is SLLELDLSYNQLQKI.

Belongs to the small leucine-rich proteoglycan (SLRP) family. SLRP class II subfamily. Binds to type I and type II collagen. In terms of processing, binds keratan sulfate chains.

The protein resides in the secreted. The protein localises to the extracellular space. It localises to the extracellular matrix. Functionally, affects the rate of fibrils formation. May have a primary role in collagen fibrillogenesis. This chain is Fibromodulin (FMOD), found in Sus scrofa (Pig).